Reading from the N-terminus, the 162-residue chain is 6,7-dimethyl-8-ribityllumazine synthase (162 aa).

Residues Y27, A58–E60, and C87–I89 contribute to the 5-amino-6-(D-ribitylamino)uracil site. E92–T93 is a binding site for (2S)-2-hydroxy-3-oxobutyl phosphate. H95 serves as the catalytic Proton donor. N120 lines the 5-amino-6-(D-ribitylamino)uracil pocket. R134 provides a ligand contact to (2S)-2-hydroxy-3-oxobutyl phosphate.

The protein belongs to the DMRL synthase family.

The enzyme catalyses (2S)-2-hydroxy-3-oxobutyl phosphate + 5-amino-6-(D-ribitylamino)uracil = 6,7-dimethyl-8-(1-D-ribityl)lumazine + phosphate + 2 H2O + H(+). It participates in cofactor biosynthesis; riboflavin biosynthesis; riboflavin from 2-hydroxy-3-oxobutyl phosphate and 5-amino-6-(D-ribitylamino)uracil: step 1/2. Functionally, catalyzes the formation of 6,7-dimethyl-8-ribityllumazine by condensation of 5-amino-6-(D-ribitylamino)uracil with 3,4-dihydroxy-2-butanone 4-phosphate. This is the penultimate step in the biosynthesis of riboflavin. The polypeptide is 6,7-dimethyl-8-ribityllumazine synthase (Azorhizobium caulinodans (strain ATCC 43989 / DSM 5975 / JCM 20966 / LMG 6465 / NBRC 14845 / NCIMB 13405 / ORS 571)).